A 392-amino-acid polypeptide reads, in one-letter code: [Phe13]-bombesin receptor (392 aa).

The Extracellular portion of the chain corresponds to 1 to 40; it reads MPEGFQSLNQTLPSAISSIAHLESLNDSFILGAKQSEDVS. Residues asparagine 9 and asparagine 26 are each glycosylated (N-linked (GlcNAc...) asparagine). Residues 41 to 62 traverse the membrane as a helical segment; sequence PGLEILALISVTYAVIISVGIL. Over 63–81 the chain is Cytoplasmic; the sequence is GNTILIKVFFKIKSMQTVP. The helical transmembrane segment at 82 to 102 threads the bilayer; it reads NIFITSLAFGDLLLLLTCVPV. Over 103–120 the chain is Extracellular; it reads DASRYIVDTWMFGRAGCK. Residues cysteine 119 and cysteine 202 are joined by a disulfide bond. The helical transmembrane segment at 121–142 threads the bilayer; the sequence is IISFIQLTSVGVSVFTLTVLSA. The Cytoplasmic segment spans residues 143 to 162; sequence DRYRAIVKPLQLQTSDAVLK. A helical membrane pass occupies residues 163–183; sequence TCGKAVCVWIISMLLAAPEAV. Topologically, residues 184–219 are extracellular; it reads FSDLYEFGSSEKNTTFEACAPYPVSEKILQETHSLI. A helical transmembrane segment spans residues 220 to 240; that stretch reads CFLVFYIVPLSIISAYYFLIA. Over 241 to 271 the chain is Cytoplasmic; it reads KTLYKSTFNMPAEEHTHARKQIESRKRVAKT. The helical transmembrane segment at 272-292 threads the bilayer; it reads VLVLVALFAVCWLPNHMLYLY. At 293–312 the chain is on the extracellular side; the sequence is RSFTYHSAVNSSAFHLSATI. Residues 313-332 form a helical membrane-spanning segment; sequence FARVLAFSNSCVNPFALYWL. The Cytoplasmic segment spans residues 333 to 392; the sequence is SRSFRQHFKKQVYCCKTEPPASQQSPTHSSTITGITAVKGNIQMSEISITLLSAYDVKKE. A lipid anchor (S-palmitoyl cysteine) is attached at cysteine 346.

It belongs to the G-protein coupled receptor 1 family. As to expression, expressed only in brain, primarily in cortex and forebrain and at low levels in the midbrain.

Its subcellular location is the cell membrane. The relative rank potency of bombesin-like peptides for this receptor is [Phe13]bombesin &gt; [Leu13]bombesin &gt; GRP &gt; neuromedin-B. The protein is [Phe13]-bombesin receptor (BB4) of Bombina orientalis (Oriental fire-bellied toad).